Here is a 467-residue protein sequence, read N- to C-terminus: Transcription factor CRF1 (467 aa).

Polar residues predominate over residues 1-10 (MLLSAPVNST). 4 disordered regions span residues 1–42 (MLLS…VVLS), 62–110 (DFES…SSKT), 151–170 (SKSE…TNED), and 341–361 (TYRD…DRKR). The segment covering 11 to 23 (VRRKPHSPNKKKP) has biased composition (basic residues). Over residues 28–42 (TAASFSSSSSTVVLS) the composition is skewed to low complexity. Residues 89 to 102 (YSREENTNEVEEKT) are compositionally biased toward basic and acidic residues.

As to quaternary structure, interacts with FHL1 to form a repressor complex. The formation of the CRF1-FHL1 complex is inhibited by the TOR pathway. Phosphorylated by CDC28 and YAK1.

The protein localises to the cytoplasm. Its subcellular location is the nucleus. In terms of biological role, transcription factor, corepressor with FHL1 of ribosomal protein genes. May be involved in the blocking of the spread of silencing. This is Transcription factor CRF1 (CRF1) from Saccharomyces cerevisiae (strain ATCC 204508 / S288c) (Baker's yeast).